Here is a 249-residue protein sequence, read N- to C-terminus: MNGRSSNSKSDEKLTAPTLYIFPHAGGTAKDYVPFAKEFSGEVKRVAVQYPGQQDGYGLPPLESIPGLAEEIFAIMKPAARIDTPVALFGHSMGGMLAFEVALRFEAAGYRVLALFLSACSAPGHIKYKQLKGYSDNEMLDLVARATGTDPEFFNDEEFRVGVLPTLRAVRAIAGYSCPPENKLSCPIYTFIGSKDWIATREDMEPWRERTTGDFSLREFPGDHFYLNKNLPELVSDIEIGTLQQFDQI.

Residues Ser92, Asp196, and His224 contribute to the active site.

The protein belongs to the thioesterase family.

The enzyme catalyses a fatty acyl-CoA + H2O = a fatty acid + CoA + H(+). Functionally, involved in the synthesis of both phthiocerol dimycocerosates (PDIMs) and phenolic glycolipids (PGLs), which are structurally related lipids non-covalently bound to the outer cell wall layer of M.tuberculosis and are important virulence factors. In Mycobacterium marinum (strain ATCC BAA-535 / M), this protein is Thioesterase TesA.